The following is a 207-amino-acid chain: uncharacterized protein (207 aa).

This is an uncharacterized protein from Rhizobium meliloti (Ensifer meliloti).